Here is a 153-residue protein sequence, read N- to C-terminus: MMSSASAMKAVGFLLLLTILTLAYAKKSGDVTELQIGVKYKPQKCDLQAHKGDKIKVHYRGKLTDGTVFDSSFERGDPIEFELGTGQVIPGWDQGLLGACVGEKRKLKIPSKLGYGDNGSPPKIPGGATLIFDTELVAVNGEPSSEAKSKNEL.

The signal sequence occupies residues 1–25; the sequence is MMSSASAMKAVGFLLLLTILTLAYA. The PPIase FKBP-type domain maps to 52–140; sequence GDKIKVHYRG…IFDTELVAVN (89 aa). Positions 150-153 match the Prevents secretion from ER motif; sequence KNEL.

The protein belongs to the FKBP-type PPIase family.

Its subcellular location is the endoplasmic reticulum lumen. The catalysed reaction is [protein]-peptidylproline (omega=180) = [protein]-peptidylproline (omega=0). Functionally, PPIases accelerate the folding of proteins. It catalyzes the cis-trans isomerization of proline imidic peptide bonds in oligopeptides. This chain is Peptidyl-prolyl cis-trans isomerase FKBP15-1 (FKBP15-1), found in Arabidopsis thaliana (Mouse-ear cress).